The sequence spans 419 residues: Creatine kinase S-type, mitochondrial (419 aa).

The transit peptide at 1-39 (MAGTFGRLLAGRVTAALFAAAGSGVLTTGYLLNQQNVKA) directs the protein to the mitochondrion. Residues 46–132 (KLFPPSADYP…FDPVIKARHN (87 aa)) form the Phosphagen kinase N-terminal domain. A Phosphagen kinase C-terminal domain is found at 159–401 (YVLSSRVRTG…NYLVDCEKKL (243 aa)). ATP is bound by residues 162–166 (SSRVR), His225, Arg270, Arg326, 354–359 (RGTGGV), and Asp369.

It belongs to the ATP:guanido phosphotransferase family. As to quaternary structure, exists as an octamer composed of four MTCK homodimers. In terms of tissue distribution, expressed in the leg muscle and heart.

Its subcellular location is the mitochondrion inner membrane. The catalysed reaction is creatine + ATP = N-phosphocreatine + ADP + H(+). Reversibly catalyzes the transfer of phosphate between ATP and various phosphogens (e.g. creatine phosphate). Creatine kinase isoenzymes play a central role in energy transduction in tissues with large, fluctuating energy demands, such as skeletal muscle, heart, brain and spermatozoa. The protein is Creatine kinase S-type, mitochondrial (CKMT2) of Gallus gallus (Chicken).